Reading from the N-terminus, the 82-residue chain is U24 protein (82 aa).

Residues 7–10 (PPSY) carry the PPXY motif motif. The helical transmembrane segment at 52-72 (FIILACLIISVILCLILILHI) threads the bilayer.

As to quaternary structure, interacts with host ITCH; this interaction probably mediates ITCH degradation. Interacts probably with NEDD4.

The protein localises to the membrane. Its function is as follows. Down-regulates of the TCR/CD3E complex and the transferrin receptor TFRC in host T-cells by blocking them from recycling back to the cell surface. The protein is U24 protein of Homo sapiens (Human).